We begin with the raw amino-acid sequence, 352 residues long: MKQYEFARHINTYFSVAQNMLFSIFLYYAFSLLIFLSIFVFKMRKALYSLLFYMCICLYIYTPVFMASLKEIEVGNYFICNLKDYPTGNCSVNHDYNKTIKLLCPIIHNKNNSDKTYDPSYCFKYDGIKDEFIINNKQNYIHNTLPGVILKSHIENDTYNLSIYPPFVVKEDITIVCICDSEKGNEGITPYLKINIKKAHGLNNDLEGDYIKGCDYGNNKGKYQFLTKSIKYTIDPICEIHAYPGDIVGINCNNYTTKIQDVSLEPNSCFGMVYFSILTMVFVKTNVNNVMPNAKYYPDLASHHGNQNSKMFLTAYLLIPNEIERDILIYCTCSYNGNKGLAIYHIFSTKED.

An N-terminal signal peptide occupies residues 1-29 (MKQYEFARHINTYFSVAQNMLFSIFLYYA). 6-Cys domains are found at residues 53–199 (YMCI…IKKA) and 210–351 (YIKG…STKE). A disulfide bridge links C57 with C90. N-linked (GlcNAc...) asparagine glycans are attached at residues N89, N97, N111, N156, and N160. Disulfide bonds link C104–C179, C122–C177, C214–C238, C252–C333, and C269–C331. N254 carries N-linked (GlcNAc...) asparagine glycosylation.

It localises to the cell membrane. Its subcellular location is the cell surface. In terms of biological role, involved in sporozoite infection of hepatocytes and replication therein. The chain is Sporozoite surface protein P36 (PBS36) from Plasmodium berghei (strain Anka).